The sequence spans 391 residues: Probable sugar efflux transporter (391 aa).

12 helical membrane-spanning segments follow: residues 16-36 (VFVFSLSAFIFNTTEFVPVAL), 51-71 (VGLMITAYAWVVSLGSLPLML), 82-102 (LLFLFALFIASHILSALAWNF), 103-123 (WVLLISRIGIAFAHSIFWSIT), 138-158 (QALGLLALGSSLAMILGLPLG), 171-191 (FGVIGGVATLIALLMWKLLPP), 210-230 (PLLMGIYLLVIMVISGHFTTY), 247-267 (ITTLMLFVFGLAGVAGSFLFG), 277-297 (FIAFAMILVICPQLLLFVFKN), 300-320 (WVIFLQIFLWGIGITSLTIAL), 338-358 (IFSGSYNVGIGSGALFGSIVI), and 361-381 (LGLGYIGFVGGALGLLALFWL).

This sequence belongs to the major facilitator superfamily. SotB (TC 2.A.1.2) family.

The protein resides in the cell inner membrane. Its function is as follows. Involved in the efflux of sugars. The physiological role may be the reduction of the intracellular concentration of toxic sugars or sugar metabolites. The polypeptide is Probable sugar efflux transporter (Helicobacter pylori (strain G27)).